The chain runs to 631 residues: Phosphomethylpyrimidine synthase (631 aa).

Substrate is bound by residues asparagine 239, methionine 268, tyrosine 297, histidine 333, 353–355, 394–397, and glutamate 433; these read SRG and DGLR. A Zn(2+)-binding site is contributed by histidine 437. Residue tyrosine 460 participates in substrate binding. Histidine 501 provides a ligand contact to Zn(2+). [4Fe-4S] cluster contacts are provided by cysteine 581, cysteine 584, and cysteine 589.

The protein belongs to the ThiC family. In terms of assembly, homodimer. [4Fe-4S] cluster serves as cofactor.

The enzyme catalyses 5-amino-1-(5-phospho-beta-D-ribosyl)imidazole + S-adenosyl-L-methionine = 4-amino-2-methyl-5-(phosphooxymethyl)pyrimidine + CO + 5'-deoxyadenosine + formate + L-methionine + 3 H(+). Its pathway is cofactor biosynthesis; thiamine diphosphate biosynthesis. Its function is as follows. Catalyzes the synthesis of the hydroxymethylpyrimidine phosphate (HMP-P) moiety of thiamine from aminoimidazole ribotide (AIR) in a radical S-adenosyl-L-methionine (SAM)-dependent reaction. In Salmonella dublin (strain CT_02021853), this protein is Phosphomethylpyrimidine synthase.